An 852-amino-acid polypeptide reads, in one-letter code: Lon protease homolog 2, peroxisomal (852 aa).

S2 bears the N-acetylserine mark. Residues 13 to 222 form the Lon N-terminal domain; the sequence is LPLLLTHEGV…MTIPLLVRQI (210 aa). 375–382 lines the ATP pocket; that stretch reads GPPGVGKT. The 187-residue stretch at 651 to 837 folds into the Lon proteolytic domain; sequence LSQPGVAIGL…DEVLNAAFDG (187 aa). Residues S743 and K786 contribute to the active site. The short motif at 850–852 is the Microbody targeting signal element; sequence SKL.

The protein belongs to the peptidase S16 family. As to quaternary structure, interacts with PEX5. Interacts with TYSND1. May interact with enzymes involved in beta-oxidation of fatty acids, including ACOX1/AOX.

It is found in the peroxisome matrix. The enzyme catalyses Hydrolysis of proteins in presence of ATP.. Functionally, ATP-dependent serine protease that mediates the selective degradation of misfolded and unassembled polypeptides in the peroxisomal matrix. Necessary for type 2 peroxisome targeting signal (PTS2)-containing protein processing and facilitates peroxisome matrix protein import. May indirectly regulate peroxisomal fatty acid beta-oxidation through degradation of the self-processed forms of TYSND1. This chain is Lon protease homolog 2, peroxisomal, found in Bos taurus (Bovine).